A 122-amino-acid polypeptide reads, in one-letter code: Small ribosomal subunit protein uS13 (122 aa).

Positions 95–116 (GLPVRGQKTKTNARTRKGRRKT) are enriched in basic residues. Residues 95–122 (GLPVRGQKTKTNARTRKGRRKTVGAATK) form a disordered region.

This sequence belongs to the universal ribosomal protein uS13 family. As to quaternary structure, part of the 30S ribosomal subunit. Forms a loose heterodimer with protein S19. Forms two bridges to the 50S subunit in the 70S ribosome.

Functionally, located at the top of the head of the 30S subunit, it contacts several helices of the 16S rRNA. In the 70S ribosome it contacts the 23S rRNA (bridge B1a) and protein L5 of the 50S subunit (bridge B1b), connecting the 2 subunits; these bridges are implicated in subunit movement. Contacts the tRNAs in the A and P-sites. This is Small ribosomal subunit protein uS13 from Campylobacter concisus (strain 13826).